Reading from the N-terminus, the 393-residue chain is MYKNQLQELAQRSCFNLPSYTCIREGPDHAPRFKASVNFNGEIFESPTYCSTLRQAEHAAAEVSLNVLSSRVPSKSLTAKILDETGIYKNLLQETAHRAGLDLPMYTSVRSGSCHFPGFSCTVELAGMTFTGESAKTKKQAEKNAAIAAWSSLKKMSSLDSQDEEKEQEAVARVLSRFKPKEVRRRETTNQWRRRTSQQDSNKDLLIERLRWINLLTNQASSSSSTSTPNQHKNSSFISLIPPPPPPKSSKILPFIQQYKDRSSQEAKTETATEMINSKAKVNETSTRLSKQMPFSDMNRYNFVGGCSVNPYSLAPAVQMRSVIPVFAAPPPKPNPNLNPSSLSSSVNEFTSSNNSCSVLNTPGLGGQEKKNLTREMIKLGSESRILDQTHDS.

DRBM domains are found at residues 1 to 70 (MYKN…VLSS) and 87 to 155 (IYKN…SLKK). Disordered stretches follow at residues 220–251 (ASSS…KSSK) and 335–371 (NPNL…QEKK). Residues 347–361 (VNEFTSSNNSCSVLN) show a composition bias toward polar residues.

As to quaternary structure, heterodimer with DRB1, DRB2 or DRB4. Interacts with DCL1 and DCL3. As to expression, expressed in the shoot apical meristem (SAM).

Its function is as follows. Binds double-stranded RNA. May be involved in RNA-mediated silencing. In Arabidopsis thaliana (Mouse-ear cress), this protein is Double-stranded RNA-binding protein 5 (DRB5).